The following is a 303-amino-acid chain: N-acetyl-D-glucosamine kinase (303 aa).

ATP is bound by residues 4–11 (GFDIGGTK) and 133–140 (GVGGGLIF). Residues histidine 157, cysteine 177, cysteine 179, and cysteine 184 each coordinate Zn(2+).

This sequence belongs to the ROK (NagC/XylR) family. NagK subfamily.

It catalyses the reaction N-acetyl-D-glucosamine + ATP = N-acetyl-D-glucosamine 6-phosphate + ADP + H(+). The protein operates within cell wall biogenesis; peptidoglycan recycling. In terms of biological role, catalyzes the phosphorylation of N-acetyl-D-glucosamine (GlcNAc) derived from cell-wall degradation, yielding GlcNAc-6-P. The polypeptide is N-acetyl-D-glucosamine kinase (Escherichia coli (strain K12 / DH10B)).